Reading from the N-terminus, the 291-residue chain is MEGMDVDLDPELMQKFSCLGTTDKDVLISEFQRLLGFQLNPAGCAFFLDMTNWNLQAAIGAYYDFESPNISVPSMSFVEDVTIGEGESIPPDTQFIKTWRIQNSGAEAWPPGVCLKYVGGDQFGHVNMVMVRSLEPQEIADVSVQMCSPSRAGMYQGQWRMCTATGLYYGDVIWVILSVEVGGLLGVTQQLSSFETEFNTQPHRKVEGNFNPFASPQKNRQSDENNLTDPGGSEFDSISKNTWAPVPEQSEQDQDRLSQSSVNLSPSSPANNLSVVTYSKGLHGPYPFGQS.

The segment at 199–291 is disordered; it reads NTQPHRKVEG…LHGPYPFGQS (93 aa). A compositionally biased stretch (polar residues) spans 212–228; the sequence is PFASPQKNRQSDENNLT. Residues S215, S222, and S265 each carry the phosphoserine modification. The segment covering 257–276 has biased composition (low complexity); that stretch reads LSQSSVNLSPSSPANNLSVV.

Interacts with IRF3; the interaction inhibits IRF3 binding to its DNA consensus sequence.

Its subcellular location is the cytoplasm. It localises to the nucleus. Functionally, negative regulator of innate antiviral response. Blocks IRF3-dependent cytokine production such as IFNA, IFNB and TNF. Interacts with IRF3 and inhibits IRF3 recruitment to type I IFN promoter sequences while also reducing nuclear levels of the coactivators EP300 and CREBBP. The protein is Protein ILRUN of Mus musculus (Mouse).